The following is a 125-amino-acid chain: MKHYEVLFILKPTLTEEEVNAKLEFVKEVLTKNGAEIETVVPMGTRKLAYKIKKYERGTYFVIYFKAPTNLIAELERVLRITEEVIRFLIVKYENKKEIAAWEKLSHGIKQSKKEIKPLDAPEIQ.

The protein belongs to the bacterial ribosomal protein bS6 family.

In terms of biological role, binds together with bS18 to 16S ribosomal RNA. In Campylobacter jejuni subsp. jejuni serotype O:23/36 (strain 81-176), this protein is Small ribosomal subunit protein bS6.